The primary structure comprises 1807 residues: Atrochrysone carboxylic acid synthase Agnpks1 (1807 aa).

An N-terminal acylcarrier protein transacylase domain (SAT) region spans residues 41-173 (LFRELHNHSK…ITGAQVIRQA (133 aa)). The 435-residue stretch at 411–845 (QSKIAIVGMS…GGNTTILLEE (435 aa)) folds into the Ketosynthase family 3 (KS3) domain. Catalysis depends on for beta-ketoacyl synthase activity residues Cys-584, His-720, and His-763. The malonyl-CoA:ACP transacylase (MAT) domain stretch occupies residues 946 to 1265 (FTFTGQGASY…SLAALHCAGV (320 aa)). A product template (PT) domain region spans residues 1334–1653 (TSTVHQIIQE…RILLSRFFSA (320 aa)). The N-terminal hotdog fold stretch occupies residues 1338–1473 (HQIIQESIDG…ATLIYGDPSE (136 aa)). The PKS/mFAS DH domain maps to 1338–1648 (HQIIQESIDG…FRRYPRILLS (311 aa)). The active-site Proton acceptor; for dehydratase activity is His-1370. The C-terminal hotdog fold stretch occupies residues 1500 to 1648 (VANRFNHQMA…FRRYPRILLS (149 aa)). The Proton donor; for dehydratase activity role is filled by Asp-1559. The Carrier domain maps to 1732–1806 (DTTTAKAIQI…DLRSWLEEYY (75 aa)). Ser-1766 bears the O-(pantetheine 4'-phosphoryl)serine mark.

The enzyme catalyses holo-[ACP] + 8 malonyl-CoA + 8 H(+) = atrochrysone carboxyl-[ACP] + 8 CO2 + 8 CoA + 2 H2O. Its pathway is secondary metabolite biosynthesis. Non-reducing polyketide synthase; part of the gene cluster that mediates the biosynthesis of agnestins, dihydroxy-xanthone metabolites. The pathway begins with the assembly and cyclization of atrochrysone thioester by the non-reducing polyketide synthase Agnpks1. The atrochrysone carboxyl ACP thioesterase AgnL7 then breaks the thioester bond and releases the atrochrysone carboxylic acid as the first enzyme-free intermediate. The decarboxylase AgnL1 then catalyzes the concerted decarboxylation-elimination required to convert atochrysone carboxylic acid into emodin anthrone, which is further oxidized to emodin by the anthrone oxygenase AgnL2. Emodin then undergoes reduction catalyzed by the oxidoreductase AgnL4 to yield the dihydroquinone tautomer which is the substrate for reduction by the short chain dehydrogenase AgnL6 reduction to produce hydroxyketone, followed by AgnL8 dehydration and likely spontaneous autoxidation to chrysophanol. Baeyer-Villiger oxidation by the oxidase AgnL3 leads to monodictyphenone via cleavage of the C-10/C-10a bond of chrysophanol. Alternative cleavage at the C-4a/C-10 bond of chrysophanol also leads to the formation some cephalone F. Further conversion to agnestins A and B, requires reduction to dihydro-monodictyphenone, oxidation to agnestin C probably via an epoxide, and rearrangement to either agnestin A or agnestin B directly, although agnestin A or agnestin B can also interconvert. Within the cluster, AgnR1 is the only unassigned oxidoreductase present which could be involved in this conversion. However, AgnR1 seems not to be involved in this step, and thus genes involved in the proposed oxidation/reduction may be located elsewhere on the genome. Further agnestin A derivatives are probably formed by spontaneous decarboxylations, dehydrations and methanolysis reactions. In Paecilomyces divaricatus (Penicillium divaricatum), this protein is Atrochrysone carboxylic acid synthase Agnpks1.